We begin with the raw amino-acid sequence, 438 residues long: Ribosomal protein uS12 methylthiotransferase RimO (438 aa).

The MTTase N-terminal domain maps to 6-118 (KQLCLISLGC…IDILIAKKQN (113 aa)). Positions 15, 49, 81, 150, 154, and 157 each coordinate [4Fe-4S] cluster. In terms of domain architecture, Radical SAM core spans 136–364 (TGSSVHAYVK…NKIALKHQHN (229 aa)).

This sequence belongs to the methylthiotransferase family. RimO subfamily. Requires [4Fe-4S] cluster as cofactor.

The protein localises to the cytoplasm. It catalyses the reaction L-aspartate(89)-[ribosomal protein uS12]-hydrogen + (sulfur carrier)-SH + AH2 + 2 S-adenosyl-L-methionine = 3-methylsulfanyl-L-aspartate(89)-[ribosomal protein uS12]-hydrogen + (sulfur carrier)-H + 5'-deoxyadenosine + L-methionine + A + S-adenosyl-L-homocysteine + 2 H(+). Catalyzes the methylthiolation of an aspartic acid residue of ribosomal protein uS12. This chain is Ribosomal protein uS12 methylthiotransferase RimO, found in Helicobacter acinonychis (strain Sheeba).